Consider the following 157-residue polypeptide: SsrA-binding protein (157 aa).

Belongs to the SmpB family.

It is found in the cytoplasm. Its function is as follows. Required for rescue of stalled ribosomes mediated by trans-translation. Binds to transfer-messenger RNA (tmRNA), required for stable association of tmRNA with ribosomes. tmRNA and SmpB together mimic tRNA shape, replacing the anticodon stem-loop with SmpB. tmRNA is encoded by the ssrA gene; the 2 termini fold to resemble tRNA(Ala) and it encodes a 'tag peptide', a short internal open reading frame. During trans-translation Ala-aminoacylated tmRNA acts like a tRNA, entering the A-site of stalled ribosomes, displacing the stalled mRNA. The ribosome then switches to translate the ORF on the tmRNA; the nascent peptide is terminated with the 'tag peptide' encoded by the tmRNA and targeted for degradation. The ribosome is freed to recommence translation, which seems to be the essential function of trans-translation. In Christiangramia forsetii (strain DSM 17595 / CGMCC 1.15422 / KT0803) (Gramella forsetii), this protein is SsrA-binding protein.